Reading from the N-terminus, the 272-residue chain is tRNA pseudouridine synthase A (272 aa).

Asp62 (nucleophile) is an active-site residue. Residue Tyr120 coordinates substrate.

The protein belongs to the tRNA pseudouridine synthase TruA family. In terms of assembly, homodimer.

It carries out the reaction uridine(38/39/40) in tRNA = pseudouridine(38/39/40) in tRNA. Its function is as follows. Formation of pseudouridine at positions 38, 39 and 40 in the anticodon stem and loop of transfer RNAs. In Nitrosomonas europaea (strain ATCC 19718 / CIP 103999 / KCTC 2705 / NBRC 14298), this protein is tRNA pseudouridine synthase A.